The sequence spans 164 residues: Putative Cys-tRNA(Pro)/Cys-tRNA(Cys) deacylase EbsC (164 aa).

It belongs to the prolyl-tRNA editing family. YbaK/EbsC subfamily.

Functionally, affects the expression of the receptor, named binding substance, that mediates mating aggregate formation. Could be a regulatory protein that suppresses the function or expression of ebsA and/or ebsMB. The sequence is that of Putative Cys-tRNA(Pro)/Cys-tRNA(Cys) deacylase EbsC from Enterococcus faecalis (strain ATCC 700802 / V583).